The following is a 155-amino-acid chain: Large ribosomal subunit protein uL22c (155 aa).

This sequence belongs to the universal ribosomal protein uL22 family. As to quaternary structure, part of the 50S ribosomal subunit.

The protein localises to the plastid. It localises to the chloroplast. In terms of biological role, this protein binds specifically to 23S rRNA. Its function is as follows. The globular domain of the protein is located near the polypeptide exit tunnel on the outside of the subunit, while an extended beta-hairpin is found that lines the wall of the exit tunnel in the center of the 70S ribosome. In Solanum bulbocastanum (Wild potato), this protein is Large ribosomal subunit protein uL22c (rpl22).